The chain runs to 453 residues: Mogroside IIIx synthase (453 aa).

H21 serves as the catalytic Proton acceptor. Residue D122 is the Charge relay of the active site. 8 residues coordinate UDP-alpha-D-glucose: S273, Q336, W354, N355, S356, E359, D375, and Q376.

The protein belongs to the UDP-glycosyltransferase family. In terms of tissue distribution, highly expressed in mature fruits.

The catalysed reaction is mogroside IIE + UDP-alpha-D-glucose = mogroside IIIX + UDP + H(+). It catalyses the reaction mogroside III + UDP-alpha-D-glucose = mogroside IV + UDP + H(+). The enzyme catalyses mogroside III + UDP-alpha-D-glucose = siamenoside I + UDP + H(+). It carries out the reaction mogroside IV + UDP-alpha-D-glucose = mogroside V + UDP + H(+). It participates in secondary metabolite biosynthesis; terpenoid biosynthesis. UDP-glycosyltransferase involved in the biosynthesis of cucurbitacin and mogroside tetracyclic triterpene natural products (e.g. siamenoside I and mogrosides IV, V and VI). Cucurbitacins have cytotoxic properties and exhibit deterrent taste as a defense barrier against herbivores. Mogrosides are nonsugar highly oxygenated compounds used as high-intensity zero-calorie sweeteners; they also possess pharmacological properties such as regulating immunity, lowering blood sugar and lipid levels, protecting the liver, and acting as antioxidants and antitumor agents. Catalyzes the branched glucosylations of mogroside II-E, mogroside III and mogroside IV. This is Mogroside IIIx synthase from Siraitia grosvenorii (Monk's fruit).